Reading from the N-terminus, the 288-residue chain is Bis(5'-nucleosyl)-tetraphosphatase, symmetrical (288 aa).

The protein belongs to the Ap4A hydrolase family.

The enzyme catalyses P(1),P(4)-bis(5'-adenosyl) tetraphosphate + H2O = 2 ADP + 2 H(+). In terms of biological role, hydrolyzes diadenosine 5',5'''-P1,P4-tetraphosphate to yield ADP. This Baumannia cicadellinicola subsp. Homalodisca coagulata protein is Bis(5'-nucleosyl)-tetraphosphatase, symmetrical.